Here is a 270-residue protein sequence, read N- to C-terminus: NADPH-dependent aldehyde reductase-like protein, chloroplastic (270 aa).

A chloroplast-targeting transit peptide spans 1 to 53 (MSTHSSISQPPLPLAGRVAIVTGSSRGIGRAIAIHLAELGARIVINYTSKAAD). 26 to 50 (RGIGRAIAIHLAELGARIVINYTSK) serves as a coordination point for NADP(+). A substrate-binding site is contributed by serine 165. Tyrosine 178 serves as the catalytic Proton acceptor.

Belongs to the short-chain dehydrogenases/reductases (SDR) family.

The protein resides in the plastid. The protein localises to the chloroplast. Its function is as follows. Aldehyde reductase that catalyzes the reduction of the aldehyde carbonyl groups on saturated and alpha,beta-unsaturated aldehydes with more than 5 carbons. The polypeptide is NADPH-dependent aldehyde reductase-like protein, chloroplastic (Arabidopsis thaliana (Mouse-ear cress)).